Consider the following 169-residue polypeptide: U3 small nucleolar ribonucleoprotein protein imp3 (169 aa).

Residues 109-166 (RRLPVVMCRLKMCETVSTSVKYVEHGHVRVGPEVITDPAFFVTRNMEDFVTWVDSSKI) form the S4 RNA-binding domain.

Belongs to the universal ribosomal protein uS4 family. Component of a heterotrimeric complex containing imp3, imp4 and mpp10.

It localises to the nucleus. The protein resides in the nucleolus. In terms of biological role, component of the U3 small nucleolar ribonucleoprotein. Required for the early cleavages at sites A0, A1 and A2 during 18S ribosomal pre-RNA processing. The sequence is that of U3 small nucleolar ribonucleoprotein protein imp3 (RBP) from Pneumocystis carinii.